A 183-amino-acid chain; its full sequence is Protein CT_584 (183 aa).

Belongs to the chlamydial CPn_0803/CT_584/TC_0873 family.

This chain is Protein CT_584, found in Chlamydia trachomatis serovar D (strain ATCC VR-885 / DSM 19411 / UW-3/Cx).